The primary structure comprises 633 residues: Chaperone protein DnaK (633 aa).

Phosphothreonine; by autocatalysis is present on threonine 196. Positions asparagine 594 to lysine 633 are disordered. A compositionally biased stretch (gly residues) spans histidine 610–glycine 619.

This sequence belongs to the heat shock protein 70 family.

Functionally, acts as a chaperone. This is Chaperone protein DnaK from Chlorobaculum tepidum (strain ATCC 49652 / DSM 12025 / NBRC 103806 / TLS) (Chlorobium tepidum).